A 2727-amino-acid chain; its full sequence is E3 ubiquitin-protein ligase Ufd4 (2727 aa).

2 disordered regions span residues 247-271 and 365-389; these read THSS…TNSD and RGSN…TDRT. Residues 365–374 are compositionally biased toward polar residues; sequence RGSNNPNQGQ. ANK repeat units lie at residues 422 to 451, 453 to 482, and 486 to 518; these read VGQT…DVNK, QRSS…YPDL, and DGKT…WMSP. The disordered stretch occupies residues 682–702; it reads AQRSSTSVVVAPRPTSDDPME. Positions 1322 to 1392 constitute an MIB/HERC2 domain; it reads QIRAQLKHMT…KYDLKLADCE (71 aa). Composition is skewed to polar residues over residues 1401–1430 and 1437–1448; these read QSMG…STPS and KNQNPEGASNQT. Disordered regions lie at residues 1401–1448, 1483–1512, 1570–1592, 1845–1871, 1905–1930, and 2092–2115; these read QSMG…SNQT, NTSS…GPSP, ESVT…REND, YPSL…QQSA, ALLG…DEYE, and STCL…ASTL. Residues 1575-1592 are compositionally biased toward low complexity; the sequence is SQSSSHPDVQSSSPREND. Over residues 1909–1930 the composition is skewed to acidic residues; sequence DLDDEDDMDEDNDEEENEDEYE. A compositionally biased stretch (polar residues) spans 2104–2115; sequence PDVSSKSGASTL. One can recognise an HECT domain in the interval 2289-2727; the sequence is RKSVLEVEFL…ATKEKGFHLN (439 aa). The active-site Glycyl thioester intermediate is Cys-2696.

The protein belongs to the UPL family. K-HECT subfamily.

It catalyses the reaction S-ubiquitinyl-[E2 ubiquitin-conjugating enzyme]-L-cysteine + [acceptor protein]-L-lysine = [E2 ubiquitin-conjugating enzyme]-L-cysteine + N(6)-ubiquitinyl-[acceptor protein]-L-lysine.. Its pathway is protein modification; protein ubiquitination. Its function is as follows. E3 ubiquitin-protein ligase which accepts ubiquitin from an E2 ubiquitin-conjugating enzyme in the form of a thioester and then directly transfers the ubiquitin to targeted substrates. Involved in the negative regulation of the Ras/MAPK signaling pathway in the wing by acting with the E2 enzyme Unc6 and the putative E3 ligases poe and Kcmf1 to mediate the ubiquitination and proteasomal degradation of rl/MAPK. This is E3 ubiquitin-protein ligase Ufd4 from Drosophila melanogaster (Fruit fly).